Here is a 264-residue protein sequence, read N- to C-terminus: Thymidylate synthase (264 aa).

Arginine 21 contacts dUMP. A (6R)-5,10-methylene-5,6,7,8-tetrahydrofolate-binding site is contributed by histidine 51. 126-127 (RR) contacts dUMP. Cysteine 146 acts as the Nucleophile in catalysis. DUMP contacts are provided by residues 166–169 (RSCD), asparagine 177, and 207–209 (HLY). Aspartate 169 is a (6R)-5,10-methylene-5,6,7,8-tetrahydrofolate binding site. Serine 263 contributes to the (6R)-5,10-methylene-5,6,7,8-tetrahydrofolate binding site.

Belongs to the thymidylate synthase family. Bacterial-type ThyA subfamily. Homodimer.

The protein localises to the cytoplasm. The catalysed reaction is dUMP + (6R)-5,10-methylene-5,6,7,8-tetrahydrofolate = 7,8-dihydrofolate + dTMP. It participates in pyrimidine metabolism; dTTP biosynthesis. Its function is as follows. Catalyzes the reductive methylation of 2'-deoxyuridine-5'-monophosphate (dUMP) to 2'-deoxythymidine-5'-monophosphate (dTMP) while utilizing 5,10-methylenetetrahydrofolate (mTHF) as the methyl donor and reductant in the reaction, yielding dihydrofolate (DHF) as a by-product. This enzymatic reaction provides an intracellular de novo source of dTMP, an essential precursor for DNA biosynthesis. The polypeptide is Thymidylate synthase (Buchnera aphidicola subsp. Schizaphis graminum (strain Sg)).